We begin with the raw amino-acid sequence, 610 residues long: UvrABC system protein C (610 aa).

In terms of domain architecture, GIY-YIG spans 16–94; sequence SQPGVYRMYD…IKLYQPRYNV (79 aa). Positions 204-239 constitute a UVR domain; that stretch reads DQVLTQLIARMEKASQNLEFEEAARIRDQIQAVRRV.

Belongs to the UvrC family. Interacts with UvrB in an incision complex.

Its subcellular location is the cytoplasm. Its function is as follows. The UvrABC repair system catalyzes the recognition and processing of DNA lesions. UvrC both incises the 5' and 3' sides of the lesion. The N-terminal half is responsible for the 3' incision and the C-terminal half is responsible for the 5' incision. This chain is UvrABC system protein C, found in Escherichia fergusonii (strain ATCC 35469 / DSM 13698 / CCUG 18766 / IAM 14443 / JCM 21226 / LMG 7866 / NBRC 102419 / NCTC 12128 / CDC 0568-73).